Reading from the N-terminus, the 600-residue chain is MSQVFSNLFQMTQRLEAQGQKTLDSPFVWDDGSDHDDVTKIHVRGDSRGINCIRFDYIKSGQRKYKSFYGPSWAGFTQTFKINHKEDEQLESVEGFYKPDSRTIVGLQFKTNLRISELIGHGKKDDTKFSLAVDGKKIIGFHGCSGSYLESLGAYFTCIAPTRMEAKGAKGGTDWNDGADHEGVAKIYVRGGRDCIQYIKFDYVKDRKYIYGPAHGVRGRGFTESFEINHLDNEYMVSVEGYYDEGDSGIIQGIQFRTNIKTSELIGYNNGKKFSLAANGKKIIGFHGYADQNLNSLGAYFTTSPFIKLESRESTGDLWDDGTFEGVRKVCIHKQPVLYSVIQFEYVNRGEVENRDLGLRVFIAEEGEFVVNYPYEFIISVEGTFTNEKDPHVASLTFKTSKGRTSSTFGTPGTKKFVLQSKGCGVVGFHGVLSNDYISGLGAYFRLLPPLPDGEKVEAKGGDGGASWDDGGFDCIRKIYIGHGEMGIAFVKFLYDKDNKFVVGDDHGSKTLLGVDEFELEHPDEYLISVEGSYDVVDGSESEVILMLRFKTNMRTSQVFGLDTTSSFILEKECHKIVGFHGKIGKMLHQIGVHVLPIID.

4 consecutive Jacalin-type lectin domains span residues 12-158 (TQRL…YFTC), 161-303 (PTRM…YFTT), 304-447 (SPFI…YFRL), and 454-597 (GEKV…HVLP).

It belongs to the jacalin lectin family.

This is Jacalin-related lectin 18 (JAL18) from Arabidopsis thaliana (Mouse-ear cress).